The primary structure comprises 90 residues: HssA/B-like protein 4 (90 aa).

Belongs to the hssA/B family.

The protein is HssA/B-like protein 4 (hssl4) of Dictyostelium discoideum (Social amoeba).